An 846-amino-acid polypeptide reads, in one-letter code: Translation initiation factor IF-2 (846 aa).

Residues 94-263 (QRSPEEIQAE…HGFQNPTGPV (170 aa)) are disordered. The span at 96–135 (SPEEIQAEQKRELDERRAAENAARDKVEAEVRQRNEEQAR) shows a compositional bias: basic and acidic residues. Composition is skewed to low complexity over residues 136–148 (RQAA…APAP) and 158–176 (AAPV…ASED). Basic and acidic residues-rich tracts occupy residues 177–206 (AAAR…RGEA) and 230–239 (TTDEESDGAR). A compositionally biased stretch (basic residues) spans 240–253 (RGRGGKSKLKKRNQ). Residues 346–513 (SRAPVVTVMG…AVLLQAEILE (168 aa)) form the tr-type G domain. Residues 355-362 (GHVDHGKT) are G1. 355–362 (GHVDHGKT) provides a ligand contact to GTP. The tract at residues 380–384 (GITQH) is G2. The interval 401–404 (DTPG) is G3. Residues 401–405 (DTPGH) and 455–458 (NKID) contribute to the GTP site. Positions 455–458 (NKID) are G4. The interval 491 to 493 (SAK) is G5.

Belongs to the TRAFAC class translation factor GTPase superfamily. Classic translation factor GTPase family. IF-2 subfamily.

The protein resides in the cytoplasm. One of the essential components for the initiation of protein synthesis. Protects formylmethionyl-tRNA from spontaneous hydrolysis and promotes its binding to the 30S ribosomal subunits. Also involved in the hydrolysis of GTP during the formation of the 70S ribosomal complex. This chain is Translation initiation factor IF-2, found in Pseudomonas putida (strain ATCC 47054 / DSM 6125 / CFBP 8728 / NCIMB 11950 / KT2440).